The primary structure comprises 158 residues: Extracellular giant hemoglobin major globin subunit A2 (158 aa).

The first 16 residues, 1–16, serve as a signal peptide directing secretion; the sequence is MKSLIVFACLVAYAAA. Positions 17-158 constitute a Globin domain; the sequence is DCTSLNRLLV…MNQIVSGISG (142 aa). Cysteine 18 and cysteine 148 are oxidised to a cystine. Cysteine 89 contributes to the hydrogen sulfide binding site. Histidine 110 serves as a coordination point for heme b.

This sequence belongs to the globin family. In terms of assembly, the 400 kDa hemoglobin consists of a spherical 24-mer arranged as a double layer of dome-shaped dodecamers. Each dodecamer is composed of the 3-fold trimer of the tetramer A1-A2-B1-B2 having one intra-tetramer (A1-B2) disulfide bond and one inter-tetramer (B1-B2) disulfide bond per tetramer.

It is found in the secreted. Its function is as follows. The extracellular giant hemoglobin is able to bind and transport oxygen and hydrosulfide simultaneously and reversibly at two different sites. This Oligobrachia mashikoi (Beard worm) protein is Extracellular giant hemoglobin major globin subunit A2 (ghbA2).